The chain runs to 237 residues: Large ribosomal subunit protein uL2 (237 aa).

Residues 1–11 (MGKRLISQNRG) are compositionally biased toward polar residues. Disordered stretches follow at residues 1–26 (MGKRLISQNRGRGTPKYRSPSHKRKG) and 204–237 (PYGGGRHQHLGKPSSVSRNTSPGRKVGHIASRRT). Basic residues-rich tracts occupy residues 13–26 (GTPKYRSPSHKRKG) and 228–237 (KVGHIASRRT).

Belongs to the universal ribosomal protein uL2 family. In terms of assembly, part of the 50S ribosomal subunit. Forms a bridge to the 30S subunit in the 70S ribosome.

Functionally, one of the primary rRNA binding proteins. Required for association of the 30S and 50S subunits to form the 70S ribosome, for tRNA binding and peptide bond formation. It has been suggested to have peptidyltransferase activity; this is somewhat controversial. Makes several contacts with the 16S rRNA in the 70S ribosome. In Methanococcus vannielii, this protein is Large ribosomal subunit protein uL2.